Reading from the N-terminus, the 518-residue chain is U3 small nucleolar RNA-associated protein 15 homolog (518 aa).

An N-acetylalanine modification is found at Ala2. WD repeat units follow at residues 36–75 (KEFG…PIKT), 78–117 (RFKD…PLRQ), 120–159 (GHTK…EILT), 162–202 (EHSD…SVLS), 204–242 (EHGQ…QLLV), 246–285 (NHHK…VVHS), and 287–326 (DYAA…KKES). A Glycyl lysine isopeptide (Lys-Gly) (interchain with G-Cter in SUMO2) cross-link involves residue Lys249.

In terms of assembly, part of the small subunit (SSU) processome, composed of more than 70 proteins and the RNA chaperone small nucleolar RNA (snoRNA) U3. May be a component of the proposed t-UTP subcomplex of the ribosomal small subunit (SSU) processome containing at least UTP4, WDR43, HEATR1, UTP15, WDR75. Interacts directly with UTP4 and WDR43.

The protein localises to the nucleus. The protein resides in the nucleolus. Functionally, ribosome biogenesis factor. Involved in nucleolar processing of pre-18S ribosomal RNA. Required for optimal pre-ribosomal RNA transcription by RNA polymerase I. Part of the small subunit (SSU) processome, first precursor of the small eukaryotic ribosomal subunit. During the assembly of the SSU processome in the nucleolus, many ribosome biogenesis factors, an RNA chaperone and ribosomal proteins associate with the nascent pre-rRNA and work in concert to generate RNA folding, modifications, rearrangements and cleavage as well as targeted degradation of pre-ribosomal RNA by the RNA exosome. In Homo sapiens (Human), this protein is U3 small nucleolar RNA-associated protein 15 homolog.